The primary structure comprises 345 residues: Probable S-adenosylmethionine carrier 2, chloroplastic (345 aa).

Residues 1-31 (MTKALSGFCCSLSLSTLVRSSSSHMDSDIVS) constitute a chloroplast transit peptide. Solcar repeat units lie at residues 76 to 148 (RVLY…TKQK), 157 to 239 (LSAV…LRIG), and 252 to 334 (ENAM…TKQI). Helical transmembrane passes span 82-102 (LITGGLAGVVVEAALYPIDTI), 121-141 (YSGLGGNLVGVLPASALFFGV), 156-176 (NLSAVAHLAAGALGGAVSSIV), 254-274 (AMIGAFAGAVTGVLTTPLDVI), and 309-329 (GMGPRVLWIGIGGSIFFGVLE).

The protein belongs to the mitochondrial carrier (TC 2.A.29) family. In terms of tissue distribution, expressed at low levels in seedlings, leaves, flowers, stems and roots.

It localises to the plastid. It is found in the chloroplast membrane. In terms of biological role, probable S-adenosylmethionine (SAM) transporter able to catalyze both uniport and exchange reactions through membranes. In Arabidopsis thaliana (Mouse-ear cress), this protein is Probable S-adenosylmethionine carrier 2, chloroplastic (SAMC2).